Consider the following 78-residue polypeptide: Omega-conotoxin-like ArMKLT1-011 (78 aa).

Residues 1–22 (MKLTCMMIVAVLFLTAWTSVTA) form the signal peptide. The propeptide occupies 23 to 48 (VNTRGELENLFLRASHEMNSEASKLD). 3 disulfides stabilise this stretch: cysteine 52-cysteine 69, cysteine 59-cysteine 73, and cysteine 68-cysteine 77.

This sequence belongs to the conotoxin O1 superfamily. Expressed by the venom duct.

The protein resides in the secreted. Omega-conotoxins act at presynaptic membranes, they bind and block voltage-gated calcium channels (Cav). This chain is Omega-conotoxin-like ArMKLT1-011, found in Conus arenatus (Sand-dusted cone).